Here is a 142-residue protein sequence, read N- to C-terminus: Fusaric acid resistance protein FusB (142 aa).

Residues 73–142 form a disordered region; sequence AAPCSRKAST…ASCSPAIRPR (70 aa). Residues 81 to 142 show a composition bias toward low complexity; that stretch reads STGSPARSSG…ASCSPAIRPR (62 aa).

Involved in the resistance (detoxification) of the fungal toxin fusaric acid. This is Fusaric acid resistance protein FusB (fusB) from Burkholderia cepacia (Pseudomonas cepacia).